The primary structure comprises 247 residues: Enolase-phosphatase E1 (247 aa).

Residues D12 and E14 each coordinate Mg(2+). Substrate contacts are provided by residues 141 to 142 and K175; that span reads SS. D200 is a binding site for Mg(2+).

Belongs to the HAD-like hydrolase superfamily. MasA/MtnC family. Monomer. It depends on Mg(2+) as a cofactor.

It localises to the cytoplasm. It is found in the nucleus. It catalyses the reaction 5-methylsulfanyl-2,3-dioxopentyl phosphate + H2O = 1,2-dihydroxy-5-(methylsulfanyl)pent-1-en-3-one + phosphate. It functions in the pathway amino-acid biosynthesis; L-methionine biosynthesis via salvage pathway; L-methionine from S-methyl-5-thio-alpha-D-ribose 1-phosphate: step 3/6. The protein operates within amino-acid biosynthesis; L-methionine biosynthesis via salvage pathway; L-methionine from S-methyl-5-thio-alpha-D-ribose 1-phosphate: step 4/6. Bifunctional enzyme that catalyzes the enolization of 2,3-diketo-5-methylthiopentyl-1-phosphate (DK-MTP-1-P) into the intermediate 2-hydroxy-3-keto-5-methylthiopentenyl-1-phosphate (HK-MTPenyl-1-P), which is then dephosphorylated to form the acireductone 1,2-dihydroxy-3-keto-5-methylthiopentene (DHK-MTPene). The protein is Enolase-phosphatase E1 of Drosophila willistoni (Fruit fly).